The sequence spans 351 residues: Glycerol-1-phosphate dehydrogenase [NAD(P)+] (351 aa).

Residues 98–102 (GSIID) and 120–123 (TTAS) each bind NAD(+). Asp125 contributes to the substrate binding site. Ser129 provides a ligand contact to NAD(+). Asp172 is a binding site for substrate. 2 residues coordinate Zn(2+): Asp172 and His252. Substrate is bound at residue His256. Position 268 (His268) interacts with Zn(2+).

The protein belongs to the glycerol-1-phosphate dehydrogenase family. Zn(2+) is required as a cofactor.

The protein resides in the cytoplasm. It carries out the reaction sn-glycerol 1-phosphate + NAD(+) = dihydroxyacetone phosphate + NADH + H(+). It catalyses the reaction sn-glycerol 1-phosphate + NADP(+) = dihydroxyacetone phosphate + NADPH + H(+). It functions in the pathway membrane lipid metabolism; glycerophospholipid metabolism. Its function is as follows. Catalyzes the NAD(P)H-dependent reduction of dihydroxyacetonephosphate (DHAP or glycerone phosphate) to glycerol 1-phosphate (G1P). The G1P thus generated is used as the glycerophosphate backbone of phospholipids in the cellular membranes of Archaea. The protein is Glycerol-1-phosphate dehydrogenase [NAD(P)+] of Thermococcus kodakarensis (strain ATCC BAA-918 / JCM 12380 / KOD1) (Pyrococcus kodakaraensis (strain KOD1)).